The following is a 784-amino-acid chain: Cadherin-5 (784 aa).

The N-terminal stretch at 1–24 is a signal peptide; it reads MQRLTELATALGAFLGLLAVAAMA. The propeptide occupies 25 to 45; it reads GPNFPQIDTPNMLPAHHRQKR. Cadherin domains are found at residues 46 to 149, 150 to 256, 257 to 371, 372 to 476, and 477 to 593; these read DWIW…WPVF, SHQV…FPVF, TQST…PPVF, QRHF…DNPP, and EFAQ…MAAQ. Residues 46-599 lie on the Extracellular side of the membrane; it reads DWIWNQMHID…MAAQAGVSIQ (554 aa). Ca(2+)-binding residues include glutamate 56 and glutamate 57. Asparagine 59 carries an N-linked (GlcNAc...) asparagine glycan. Residues aspartate 107, glutamate 109, aspartate 141, isoleucine 142, asparagine 143, aspartate 144, and asparagine 145 each contribute to the Ca(2+) site. An N-linked (GlcNAc...) asparagine glycan is attached at asparagine 155. Positions 175, 177, 184, and 229 each coordinate Ca(2+). Asparagine 441, asparagine 523, and asparagine 535 each carry an N-linked (GlcNAc...) asparagine glycan. The helical transmembrane segment at 600–620 threads the bilayer; it reads ALVAIFLCILTITVITLLIIL. Residues 621 to 660 are required for interaction with PALS1; it reads RRRIRKQAHAHSKSALEIHEQLVTYDEEGGGEMDTTSYDV. At 621-784 the chain is on the cytoplasmic side; sequence RRRIRKQAHA…GSDPQEELII (164 aa).

Part of a complex composed of AMOTL2, MAGI1 and CDH5, within the complex AMOTL2 acts as a scaffold protein for the interaction of MAGI1 with CDH5. The complex is required for coupling actin fibers to cell junctions in endothelial cells. Within the complex AMOTL2 (via its N-terminus) interacts with CDH5. Interacts (via cadherin 5 domain) with PTPRB. Interacts with TRPC4. Interacts with KRIT1. Interacts with PARD3. Interacts with RTN4 (isoform B). Interacts with PALS1; the interaction promotes PALS1 localization to cell junctions and is required for CDH5-mediated vascular lumen formation and endothelial cell polarity. Interacts with CTNND1/p120-catenin; the interaction controls CADH5 endocytosis. Post-translationally, phosphorylated on tyrosine residues by KDR/VEGFR-2. Dephosphorylated by PTPRB. In terms of processing, O-glycosylated. As to expression, expressed in postnatal endothelial cells of the retinal vascular plexus (at protein level).

It localises to the cell junction. It is found in the adherens junction. The protein resides in the cell membrane. The protein localises to the cytoplasm. In terms of biological role, cadherins are calcium-dependent cell adhesion proteins. They preferentially interact with themselves in a homophilic manner in connecting cells; cadherins may thus contribute to the sorting of heterogeneous cell types. This cadherin may play an important role in endothelial cell biology through control of the cohesion and organization of the intercellular junctions. It associates with alpha-catenin forming a link to the cytoskeleton. Plays a role in coupling actin fibers to cell junctions in endothelial cells, via acting as a cell junctional complex anchor for AMOTL2 and MAGI1. Acts in concert with KRIT1 and PALS1 to establish and maintain correct endothelial cell polarity and vascular lumen. These effects are mediated by recruitment and activation of the Par polarity complex and RAP1B. Required for activation of PRKCZ and for localization of phosphorylated PRKCZ, PARD3, TIAM1 and RAP1B to the cell junction. Associates with CTNND1/p120-catenin to control CADH5 endocytosis. This Mus musculus (Mouse) protein is Cadherin-5.